Consider the following 197-residue polypeptide: Phospholipid hydroperoxide glutathione peroxidase GPX4 (197 aa).

Ser-40 is subject to Phosphoserine. Sec-73 is an active-site residue. Sec-73 is a non-standard amino acid (selenocysteine).

It belongs to the glutathione peroxidase family. In terms of assembly, monomer. Has a tendency to form higher mass oligomers. Interacts with FUNDC1; this interaction promotes GPX4 recruitment into mitochondria through TOM/TIM complex where it is degraded by mitophagy. In terms of tissue distribution, widely expressed with the highest levels in testis, heart, cerebrum, ileum, stomach, liver, jejunum and epididymis. Expressed primarily in testis and sperm midpiece (at protein level). Expressed in brain (at protein level). Expressed in heart, liver and kidney (at protein level). Expressed in retina, especially in inner segments of photoreceptor cells (at protein level). As to expression, highly expressed during embryogenesis. Down-regulated between 14.5 dpc and 17.5 dpc. Highly expressed during embryogenesis. In contrast to isoform Mitochondrial and isoform Nuclear, which are down-regulated between 14.5 dpc and 17.5 dpc, remains constant. In terms of tissue distribution, mainly expressed in sperm. Weakly expressed during embryogenesis. Down-regulated between 14.5 dpc and 17.5 dpc.

Its subcellular location is the mitochondrion. It is found in the cytoplasm. The protein localises to the nucleus. The catalysed reaction is a hydroperoxy polyunsaturated fatty acid + 2 glutathione = a hydroxy polyunsaturated fatty acid + glutathione disulfide + H2O. It catalyses the reaction 2 glutathione + H2O2 = glutathione disulfide + 2 H2O. It carries out the reaction tert-butyl hydroperoxide + 2 glutathione = tert-butanol + glutathione disulfide + H2O. The enzyme catalyses cumene hydroperoxide + 2 glutathione = 2-phenylpropan-2-ol + glutathione disulfide + H2O. The catalysed reaction is (9S)-hydroperoxy-(10E,12Z)-octadecadienoate + 2 glutathione = (9S)-hydroxy-(10E,12Z)-octadecadienoate + glutathione disulfide + H2O. It catalyses the reaction (13S)-hydroperoxy-(9Z,11E)-octadecadienoate + 2 glutathione = (13S)-hydroxy-(9Z,11E)-octadecadienoate + glutathione disulfide + H2O. It carries out the reaction (5S)-hydroperoxy-(6E,8Z,11Z,14Z)-eicosatetraenoate + 2 glutathione = (5S)-hydroxy-(6E,8Z,11Z,14Z)-eicosatetraenoate + glutathione disulfide + H2O. The enzyme catalyses (12R)-hydroperoxy-(5Z,8Z,10E,14Z)-eicosatetraenoate + 2 glutathione = (12R)-hydroxy-(5Z,8Z,10E,14Z)-eicosatetraenoate + glutathione disulfide + H2O. The catalysed reaction is (12S)-hydroperoxy-(5Z,8Z,10E,14Z)-eicosatetraenoate + 2 glutathione = (12S)-hydroxy-(5Z,8Z,10E,14Z)-eicosatetraenoate + glutathione disulfide + H2O. It catalyses the reaction (15S)-hydroperoxy-(5Z,8Z,11Z,13E)-eicosatetraenoate + 2 glutathione = (15S)-hydroxy-(5Z,8Z,11Z,13E)-eicosatetraenoate + glutathione disulfide + H2O. It carries out the reaction (5S)-hydroperoxy-(6E,8Z,11Z,14Z,17Z)-eicosapentaenoate + 2 glutathione = (5S)-hydroxy-(6E,8Z,11Z,14Z,17Z)-eicosapentaenoate + glutathione disulfide + H2O. The enzyme catalyses (12S)-hydroperoxy-(5Z,8Z,10E,14Z,17Z)-eicosapentaenoate + 2 glutathione = (12S)-hydroxy-(5Z,8Z,10E,14Z,17Z)-eicosapentaenoate + glutathione disulfide + H2O. The catalysed reaction is (15S)-hydroperoxy-(5Z,8Z,11Z,13E,17Z)-eicosapentaenoate + 2 glutathione = (15S)-hydroxy-(5Z,8Z,11Z,13E,17Z)-eicosapentaenoate + glutathione disulfide + H2O. It catalyses the reaction (15S)-hydroperoxy-(11Z,13E)-eicosadienoate + 2 glutathione = (15S)-hydroxy-(11Z,13E)-eicosadienoate + glutathione disulfide + H2O. It carries out the reaction (17S)-hydroperoxy-(4Z,7Z,10Z,13Z,15E,19Z)-docosahexaenoate + 2 glutathione = (17S)-hydroxy-(4Z,7Z,10Z,13Z,15E,19Z)-docosahexaenoate + glutathione disulfide + H2O. The enzyme catalyses a hydroperoxy-1,2-diacyl-glycero-3-phosphocholine + 2 glutathione = a hydroxy-1,2-diacyl-glycero-3-phosphocholine + glutathione disulfide + H2O. Essential antioxidant peroxidase that directly reduces phospholipid hydroperoxide even if they are incorporated in membranes and lipoproteins. Can also reduce fatty acid hydroperoxide, cholesterol hydroperoxide and thymine hydroperoxide. Plays a key role in protecting cells from oxidative damage by preventing membrane lipid peroxidation. Required to prevent cells from ferroptosis, a non-apoptotic cell death resulting from an iron-dependent accumulation of lipid reactive oxygen species. The presence of selenocysteine (Sec) versus Cys at the active site is essential for life: it provides resistance to overoxidation and prevents cells against ferroptosis. The presence of Sec at the active site is also essential for the survival of a specific type of parvalbumin-positive interneurons, thereby preventing against fatal epileptic seizures. May be required to protect cells from the toxicity of ingested lipid hydroperoxides. Required for normal sperm development and male fertility. Essential for maturation and survival of photoreceptor cells. Plays a role in a primary T-cell response to viral and parasitic infection by protecting T-cells from ferroptosis and by supporting T-cell expansion. Plays a role of glutathione peroxidase in platelets in the arachidonic acid metabolism. Reduces hydroperoxy ester lipids formed by a 15-lipoxygenase that may play a role as down-regulator of the cellular 15-lipoxygenase pathway. Can also reduce small soluble hydroperoxides such as H2O2 and tert-butyl hydroperoxide. In terms of biological role, specifically able to suppress the production of leukotriene and prostaglandin in response to several stimuli by reducing fatty acid hydroperoxide. Functionally, specifically required to prevent mitochondrial cell death by mediating reduction of cardiolipin hydroperoxide. Also required for normal sperm development and male fertility. Its function is as follows. Required for male fertility by stabilizing the condensed chromatin in sperm nuclei. The sequence is that of Phospholipid hydroperoxide glutathione peroxidase GPX4 from Mus musculus (Mouse).